The primary structure comprises 150 residues: D-aminoacyl-tRNA deacylase (150 aa).

A Gly-cisPro motif, important for rejection of L-amino acids motif is present at residues 138–139 (GP).

It belongs to the DTD family. Homodimer.

The protein resides in the cytoplasm. The catalysed reaction is glycyl-tRNA(Ala) + H2O = tRNA(Ala) + glycine + H(+). It catalyses the reaction a D-aminoacyl-tRNA + H2O = a tRNA + a D-alpha-amino acid + H(+). Its function is as follows. An aminoacyl-tRNA editing enzyme that deacylates mischarged D-aminoacyl-tRNAs. Also deacylates mischarged glycyl-tRNA(Ala), protecting cells against glycine mischarging by AlaRS. Acts via tRNA-based rather than protein-based catalysis; rejects L-amino acids rather than detecting D-amino acids in the active site. By recycling D-aminoacyl-tRNA to D-amino acids and free tRNA molecules, this enzyme counteracts the toxicity associated with the formation of D-aminoacyl-tRNA entities in vivo and helps enforce protein L-homochirality. This Bacteroides fragilis (strain ATCC 25285 / DSM 2151 / CCUG 4856 / JCM 11019 / LMG 10263 / NCTC 9343 / Onslow / VPI 2553 / EN-2) protein is D-aminoacyl-tRNA deacylase.